A 710-amino-acid polypeptide reads, in one-letter code: mRNA export factor crp79 (710 aa).

RRM domains follow at residues 19–102 (IYVG…KLTI) and 222–292 (HFKQ…PTTP). Residues 333–348 (QWGSVSTTGVSNQQNH) show a composition bias toward polar residues. The disordered stretch occupies residues 333–357 (QWGSVSTTGVSNQQNHPAAWNPDNK). In terms of domain architecture, RRM 3 spans 401–474 (EDLFSPFGSI…DRIRRLQAFF (74 aa)). The span at 502–524 (TIRKPIESSTNKISENPTTLSSK) shows a compositional bias: polar residues. A disordered region spans residues 502 to 544 (TIRKPIESSTNKISENPTTLSSKVENKNEPKTGENKEPSQTNE). Basic and acidic residues predominate over residues 525-538 (VENKNEPKTGENKE).

The protein resides in the cytoplasm. It is found in the nucleus. Its function is as follows. Binds the poly(A) tail of mRNA. Involved in the export of mRNA from the nucleus to the cytoplasm. This Schizosaccharomyces pombe (strain 972 / ATCC 24843) (Fission yeast) protein is mRNA export factor crp79 (crp79).